A 236-amino-acid chain; its full sequence is UPF0173 metal-dependent hydrolase Mnod_3315 (236 aa).

This sequence belongs to the UPF0173 family.

The chain is UPF0173 metal-dependent hydrolase Mnod_3315 from Methylobacterium nodulans (strain LMG 21967 / CNCM I-2342 / ORS 2060).